A 609-amino-acid chain; its full sequence is Zinc metalloproteinase-disintegrin-like (609 aa).

The N-terminal stretch at 1–20 (MIQVLLVTICLAALPYQGSS) is a signal peptide. Residues 21–189 (IILESGNVND…KKASQLVVTA (169 aa)) constitute a propeptide that is removed on maturation. Positions 198-393 (RFVELVLVVD…QNPECIVNEP (196 aa)) constitute a Peptidase M12B domain. Ca(2+) contacts are provided by Glu-201 and Asp-285. Cystine bridges form between Cys-308-Cys-388, Cys-348-Cys-372, and Cys-350-Cys-355. His-333 contacts Zn(2+). The active site involves Glu-334. Zn(2+)-binding residues include His-337 and His-343. Asn-371 carries an N-linked (GlcNAc...) asparagine glycan. Positions 388, 391, 403, 406, 408, 410, 413, and 416 each coordinate Ca(2+). The Disintegrin domain maps to 401–487 (PPVCGNELLE…ECPADVFHKN (87 aa)). 14 cysteine pairs are disulfide-bonded: Cys-404-Cys-433, Cys-415-Cys-428, Cys-417-Cys-423, Cys-427-Cys-450, Cys-441-Cys-447, Cys-446-Cys-472, Cys-459-Cys-479, Cys-466-Cys-498, Cys-491-Cys-503, Cys-510-Cys-560, Cys-525-Cys-571, Cys-538-Cys-548, Cys-555-Cys-597, and Cys-591-Cys-602. The D/ECD-tripeptide signature appears at 465-467 (ECD). Positions 467, 468, 470, 482, and 483 each coordinate Ca(2+).

The protein belongs to the venom metalloproteinase (M12B) family. P-III subfamily. P-IIIa sub-subfamily. As to quaternary structure, monomer. Requires Zn(2+) as cofactor. In terms of tissue distribution, expressed by the venom gland.

The protein localises to the secreted. In terms of biological role, this protein is a zinc metalloprotease from snake venom that possesses hemorrhagic activity. This Crotalus durissus durissus (Central American rattlesnake) protein is Zinc metalloproteinase-disintegrin-like.